The primary structure comprises 130 residues: Large ribosomal subunit protein bL31c (130 aa).

The N-terminal 36 residues, 1 to 36 (MVLTLSNQFLAKIPATPKTLTLPKTSSSTLRPQWSC), are a transit peptide targeting the chloroplast.

This sequence belongs to the bacterial ribosomal protein bL31 family. Type A subfamily. In terms of assembly, component of the chloroplast large ribosomal subunit (LSU). Mature 70S chloroplast ribosomes of higher plants consist of a small (30S) and a large (50S) subunit. The 30S small subunit contains 1 molecule of ribosomal RNA (16S rRNA) and 24 different proteins. The 50S large subunit contains 3 rRNA molecules (23S, 5S and 4.5S rRNA) and 33 different proteins.

It is found in the plastid. The protein resides in the chloroplast. Component of the chloroplast ribosome (chloro-ribosome), a dedicated translation machinery responsible for the synthesis of chloroplast genome-encoded proteins, including proteins of the transcription and translation machinery and components of the photosynthetic apparatus. This chain is Large ribosomal subunit protein bL31c (RPL31), found in Spinacia oleracea (Spinach).